The sequence spans 875 residues: SPbeta prophage-derived uncharacterized protein YomG (875 aa).

Residues 351-381 are a coiled coil; it reads AKKAEISRINSQITNISQEIEKLKDRLSMDK. Positions 537–648 constitute a Fibronectin type-III domain; that stretch reads PVANPTILNN…SIDSSGRILS (112 aa).

The polypeptide is SPbeta prophage-derived uncharacterized protein YomG (yomG) (Bacillus subtilis (strain 168)).